We begin with the raw amino-acid sequence, 831 residues long: von Willebrand factor A domain-containing protein DDB_G0285981 (831 aa).

Positions 60-188 constitute a VIT domain; sequence RDTFGLKTFS…NVTIHLTIIS (129 aa). The VWFA domain maps to 312–480; the sequence is EFIFLIDCSG…NFEEQVMKLV (169 aa).

The protein is von Willebrand factor A domain-containing protein DDB_G0285981 of Dictyostelium discoideum (Social amoeba).